A 221-amino-acid polypeptide reads, in one-letter code: Mediator of RNA polymerase II transcription subunit 19a (221 aa).

The tract at residues 101 to 221 (PVELPPAEKG…DEVGAIRVAG (121 aa)) is disordered. The segment covering 142-152 (EHKKHKHKHKD) has biased composition (basic residues). The span at 153–178 (RSKDKDKDKDRDRKKDKNGHHDSGDH) shows a compositional bias: basic and acidic residues. The span at 179–188 (SKKHHDKKRK) shows a compositional bias: basic residues.

It belongs to the plant Mediator complex subunit 19 family. As to quaternary structure, component of the Mediator complex. Interacts with FIB2.

Its subcellular location is the nucleus. Its function is as follows. Component of the Mediator complex, a coactivator involved in the regulated transcription of nearly all RNA polymerase II-dependent genes. Mediator functions as a bridge to convey information from gene-specific regulatory proteins to the basal RNA polymerase II transcription machinery. The Mediator complex, having a compact conformation in its free form, is recruited to promoters by direct interactions with regulatory proteins and serves for the assembly of a functional preinitiation complex with RNA polymerase II and the general transcription factors. The sequence is that of Mediator of RNA polymerase II transcription subunit 19a (MED19A) from Arabidopsis thaliana (Mouse-ear cress).